The primary structure comprises 538 residues: Thermosome subunit beta (538 aa).

Residues 518–538 are disordered; the sequence is SSGSSEEGMEEMGGMGGMPPM. Positions 528–538 are enriched in gly residues; sequence EMGGMGGMPPM.

Belongs to the TCP-1 chaperonin family. In terms of assembly, forms a Heterooligomeric complex of two stacked eight-membered rings.

Its function is as follows. Molecular chaperone; binds unfolded polypeptides in vitro, and has a weak ATPase activity. In Methanothermobacter thermautotrophicus (strain ATCC 29096 / DSM 1053 / JCM 10044 / NBRC 100330 / Delta H) (Methanobacterium thermoautotrophicum), this protein is Thermosome subunit beta (thsB).